The following is a 625-amino-acid chain: MFPQRLDSTIAYDIAKAMMDGFNRHYQLFRTESARAKHRFETADWHGQQRAQRERIEFYDLRVREASTRLEREFKAGEQSMDVWHQVKLHYIGLLVNHHQPELAETFFNSVTTKILHRSYFQNDFIFVRPAVSTEYIENEEPTAQPTYRAYYPTRDNLREIIVRLVRDFDLRLEFEDLERDAGYVLEAVSERLSDVKLRANFQIQVLSGLFFRNKGAYVVGKIINGFNEVPLALPILHSKSGKLVIDAALFGEDDLLILFSFARAYFMVDMGIPSAYVQFLRSMMPHMPRAEIYNALGLAKQGKTLFYRDFLHHLRHSTDKFRIAPGIKGMVMLVFDLPSFPYVFKVIKDYYPPQKDTSREQIKGKYLLVKQHDRVGRMADTQEYSEVAFPRARFDDELIAEIEKFAPSQLEISDRDRDGNTEVIIKHVYIERRMIPLNIYLQEAFDAGVGEPAAKNQIERAVVEYGNAIKDLVAANIFPGDMLWKNFGITRHGKVVFYDYDEIEYITDCKFRRVPAPRNDEEEMSGEVWYSVGPKDVFPETFAPFLLGNDAVREVFMKHHGDLLDAEFWQSHQARIQAGHVHDVFPYEREKRFTRRHSPGRNDHELLTHLPPEPMLTGLSGMTP.

ATP-binding positions include 325–331 (APGIKGM) and Lys346. Asp381 is an active-site residue. The disordered stretch occupies residues 596-625 (RRHSPGRNDHELLTHLPPEPMLTGLSGMTP).

The protein belongs to the AceK family.

Its subcellular location is the cytoplasm. It carries out the reaction L-seryl-[isocitrate dehydrogenase] + ATP = O-phospho-L-seryl-[isocitrate dehydrogenase] + ADP + H(+). Functionally, bifunctional enzyme which can phosphorylate or dephosphorylate isocitrate dehydrogenase (IDH) on a specific serine residue. This is a regulatory mechanism which enables bacteria to bypass the Krebs cycle via the glyoxylate shunt in response to the source of carbon. When bacteria are grown on glucose, IDH is fully active and unphosphorylated, but when grown on acetate or ethanol, the activity of IDH declines drastically concomitant with its phosphorylation. The protein is Isocitrate dehydrogenase kinase/phosphatase of Polaromonas sp. (strain JS666 / ATCC BAA-500).